A 278-amino-acid chain; its full sequence is Orotidine 5'-phosphate decarboxylase (278 aa).

Catalysis depends on K95, which acts as the Proton donor.

This sequence belongs to the OMP decarboxylase family. Type 2 subfamily.

It carries out the reaction orotidine 5'-phosphate + H(+) = UMP + CO2. Its pathway is pyrimidine metabolism; UMP biosynthesis via de novo pathway; UMP from orotate: step 2/2. The polypeptide is Orotidine 5'-phosphate decarboxylase (Methylibium petroleiphilum (strain ATCC BAA-1232 / LMG 22953 / PM1)).